A 133-amino-acid chain; its full sequence is Basic leucine zipper transcriptional factor ATF-like 3 (133 aa).

The interval 1–68 (MSQGPPAGGV…EHESLEQENS (68 aa)) is disordered. A phosphoserine mark is found at serine 2 and serine 24. The segment covering 11-24 (LQSSVAAPGNQPQS) has biased composition (polar residues). In terms of domain architecture, bZIP spans 28 to 91 (DDRKVRRREK…RHLTEALKEH (64 aa)). The segment at 30–55 (RKVRRREKNRVAAQRSRKKQTQKSDK) is basic motif. Residues 51-68 (QKSDKLHEEHESLEQENS) are compositionally biased toward basic and acidic residues. The interval 56 to 84 (LHEEHESLEQENSVLRREIAKLKEELRHL) is leucine-zipper.

The protein belongs to the bZIP family. Heterodimer; heterodimerizes with JUN family proteins. Interacts with JUN. As to expression, ubiquitously expressed.

It is found in the nucleus. In terms of biological role, AP-1 family transcription factor that controls the differentiation of CD8(+) thymic conventional dendritic cells in the immune system. Acts via the formation of a heterodimer with JUN family proteins that recognizes and binds DNA sequence 5'-TGA[CG]TCA-3' and regulates expression of target genes. Required for development of CD8-alpha(+) classical dendritic cells (cDCs) and related CD103(+) dendritic cells that cross-present antigens to CD8 T-cells and produce interleukin-12 (IL12) in response to pathogens. The sequence is that of Basic leucine zipper transcriptional factor ATF-like 3 (Batf3) from Rattus norvegicus (Rat).